A 358-amino-acid polypeptide reads, in one-letter code: Adenosine deaminase (358 aa).

Zn(2+) contacts are provided by histidine 14 and histidine 16. Residues histidine 16, aspartate 18, and glycine 183 each coordinate substrate. Residue histidine 212 coordinates Zn(2+). Glutamate 215 (proton donor) is an active-site residue. Residue aspartate 294 participates in Zn(2+) binding. Position 295 (aspartate 295) interacts with substrate.

The protein belongs to the metallo-dependent hydrolases superfamily. Adenosine and AMP deaminases family. Zn(2+) is required as a cofactor.

It is found in the cell membrane. It localises to the cell junction. The protein localises to the cytoplasmic vesicle lumen. Its subcellular location is the cytoplasm. The protein resides in the lysosome. It catalyses the reaction adenosine + H2O + H(+) = inosine + NH4(+). The enzyme catalyses 2'-deoxyadenosine + H2O + H(+) = 2'-deoxyinosine + NH4(+). In terms of biological role, catalyzes the hydrolytic deamination of adenosine and 2-deoxyadenosine. Plays an important role in purine metabolism and in adenosine homeostasis. Modulates signaling by extracellular adenosine, and so contributes indirectly to cellular signaling events. May act as a positive regulator of T-cell coactivation. This Xenopus tropicalis (Western clawed frog) protein is Adenosine deaminase (ada).